Here is a 215-residue protein sequence, read N- to C-terminus: Small ribosomal subunit protein bS6 (215 aa).

Disordered regions lie at residues arginine 121–lysine 153 and asparagine 187–glutamine 215. Over residues serine 144–lysine 153 the composition is skewed to basic and acidic residues. Positions glutamine 188–asparagine 198 are enriched in low complexity. The span at arginine 199–glutamine 215 shows a compositional bias: basic and acidic residues.

Belongs to the bacterial ribosomal protein bS6 family.

Binds together with bS18 to 16S ribosomal RNA. The sequence is that of Small ribosomal subunit protein bS6 (rpsF) from Mycoplasma pneumoniae (strain ATCC 29342 / M129 / Subtype 1) (Mycoplasmoides pneumoniae).